Here is a 142-residue protein sequence, read N- to C-terminus: Large ribosomal subunit protein uL13 (142 aa).

The protein belongs to the universal ribosomal protein uL13 family. In terms of assembly, part of the 50S ribosomal subunit.

Functionally, this protein is one of the early assembly proteins of the 50S ribosomal subunit, although it is not seen to bind rRNA by itself. It is important during the early stages of 50S assembly. This chain is Large ribosomal subunit protein uL13, found in Erwinia tasmaniensis (strain DSM 17950 / CFBP 7177 / CIP 109463 / NCPPB 4357 / Et1/99).